Here is a 160-residue protein sequence, read N- to C-terminus: Transcription elongation factor GreA 2 (160 aa).

The stretch at 9–73 (MTEEGKVKLE…RIKTVEHMLQ (65 aa)) forms a coiled coil.

It belongs to the GreA/GreB family.

Necessary for efficient RNA polymerase transcription elongation past template-encoded arresting sites. The arresting sites in DNA have the property of trapping a certain fraction of elongating RNA polymerases that pass through, resulting in locked ternary complexes. Cleavage of the nascent transcript by cleavage factors such as GreA or GreB allows the resumption of elongation from the new 3'terminus. GreA releases sequences of 2 to 3 nucleotides. The sequence is that of Transcription elongation factor GreA 2 from Lactiplantibacillus plantarum (strain ATCC BAA-793 / NCIMB 8826 / WCFS1) (Lactobacillus plantarum).